The sequence spans 407 residues: Arylacetamide deacetylase-like 4 family member 1 (407 aa).

The Cytoplasmic portion of the chain corresponds to 1–4; it reads MLYL. The chain crosses the membrane as a helical; Signal-anchor for type II membrane protein span at residues 5–25; that stretch reads VGFLLATVCLLVLGVNVWVLI. Over 26–407 the chain is Lumenal; the sequence is DHFLTIDVPP…NAVVSYIKDL (382 aa). An Involved in the stabilization of the negatively charged intermediate by the formation of the oxyanion hole motif is present at residues 119–121; it reads HGG. The N-linked (GlcNAc...) asparagine glycan is linked to Asn168. Catalysis depends on residues Ser193, Asp347, and His377.

This sequence belongs to the 'GDXG' lipolytic enzyme family.

The protein localises to the membrane. This Mus musculus (Mouse) protein is Arylacetamide deacetylase-like 4 family member 1.